Here is a 32-residue protein sequence, read N- to C-terminus: Cytochrome b6-f complex subunit 7 (32 aa).

The chain crosses the membrane as a helical span at residues 9–27 (AAVFWILIPIGLVGGALLL).

This sequence belongs to the PetM family. As to quaternary structure, the 4 large subunits of the cytochrome b6-f complex are cytochrome b6, subunit IV (17 kDa polypeptide, PetD), cytochrome f and the Rieske protein, while the 4 small subunits are PetG, PetL, PetM and PetN. The complex functions as a dimer.

Its subcellular location is the cellular thylakoid membrane. Component of the cytochrome b6-f complex, which mediates electron transfer between photosystem II (PSII) and photosystem I (PSI), cyclic electron flow around PSI, and state transitions. This is Cytochrome b6-f complex subunit 7 from Prochlorococcus marinus (strain MIT 9515).